The sequence spans 60 residues: Large ribosomal subunit protein uL30 (60 aa).

It belongs to the universal ribosomal protein uL30 family. Part of the 50S ribosomal subunit.

This chain is Large ribosomal subunit protein uL30, found in Oceanobacillus iheyensis (strain DSM 14371 / CIP 107618 / JCM 11309 / KCTC 3954 / HTE831).